The primary structure comprises 192 residues: Ribose 1,5-bisphosphate phosphokinase PhnN (192 aa).

This sequence belongs to the ribose 1,5-bisphosphokinase family.

It carries out the reaction alpha-D-ribose 1,5-bisphosphate + ATP = 5-phospho-alpha-D-ribose 1-diphosphate + ADP. It participates in metabolic intermediate biosynthesis; 5-phospho-alpha-D-ribose 1-diphosphate biosynthesis; 5-phospho-alpha-D-ribose 1-diphosphate from D-ribose 5-phosphate (route II): step 3/3. In terms of biological role, catalyzes the phosphorylation of ribose 1,5-bisphosphate to 5-phospho-D-ribosyl alpha-1-diphosphate (PRPP). This is Ribose 1,5-bisphosphate phosphokinase PhnN from Achromobacter xylosoxidans (strain A8).